Consider the following 147-residue polypeptide: MSAPMIGMVVLVVVLGLAVLALSYRLWKLRQGGTAGIMRDIPAVGGHGWRHGVIRYRGGEAAFYRLSSLRLWPDRRLSRRGVEIISRRAPRGDEFDIMTDEIVVVELCDSTQDRRVGYEIALDRGALTAFLSWLESRPSPRARRRSM.

A helical membrane pass occupies residues 3–23 (APMIGMVVLVVVLGLAVLALS).

The protein to M.leprae ML1147.

The protein localises to the membrane. This is an uncharacterized protein from Mycobacterium tuberculosis (strain CDC 1551 / Oshkosh).